The following is a 722-amino-acid chain: Pesticidal crystal protein Cry22Aa (722 aa).

In terms of biological role, promotes colloidosmotic lysis by binding to the midgut epithelial cells of hymenopteran species. This Bacillus thuringiensis protein is Pesticidal crystal protein Cry22Aa (cry22Aa).